Here is a 323-residue protein sequence, read N- to C-terminus: o-succinylbenzoate synthase (323 aa).

Residue lysine 134 is the Proton donor of the active site. Aspartate 162, glutamate 191, and aspartate 214 together coordinate Mg(2+). The active-site Proton acceptor is the lysine 236.

Belongs to the mandelate racemase/muconate lactonizing enzyme family. MenC type 1 subfamily. The cofactor is a divalent metal cation.

The catalysed reaction is (1R,6R)-6-hydroxy-2-succinyl-cyclohexa-2,4-diene-1-carboxylate = 2-succinylbenzoate + H2O. It functions in the pathway quinol/quinone metabolism; 1,4-dihydroxy-2-naphthoate biosynthesis; 1,4-dihydroxy-2-naphthoate from chorismate: step 4/7. Its pathway is quinol/quinone metabolism; menaquinone biosynthesis. Converts 2-succinyl-6-hydroxy-2,4-cyclohexadiene-1-carboxylate (SHCHC) to 2-succinylbenzoate (OSB). This chain is o-succinylbenzoate synthase, found in Yersinia pestis bv. Antiqua (strain Antiqua).